Here is a 780-residue protein sequence, read N- to C-terminus: Ribosome biogenesis protein BOP1 homolog (780 aa).

Over residues 1–11 (MTKKQAIKRKV) the composition is skewed to basic residues. The tract at residues 1 to 155 (MTKKQAIKRK…DSDTSDEEDI (155 aa)) is disordered. The span at 17–26 (TNEQSSASEP) shows a compositional bias: polar residues. Acidic residues-rich tracts occupy residues 44-53 (EDTTDDEGID), 60-72 (SSED…DEEG), 83-113 (AEGD…DAEE), and 145-154 (EDSDTSDEED). WD repeat units follow at residues 441–482 (GHTD…RTIE), 484–522 (NDVV…KLLI), 566–608 (THFK…SQIP), 611–649 (KSKG…LIKK), 652–691 (TNSK…KPYQ), 695–734 (LHRN…DLLQ), and 750–780 (RDEF…RLYT).

It belongs to the WD repeat BOP1/ERB1 family.

Its subcellular location is the nucleus. It localises to the nucleolus. The protein resides in the nucleoplasm. Its function is as follows. Required for maturation of ribosomal RNAs and formation of the large ribosomal subunit. This chain is Ribosome biogenesis protein BOP1 homolog, found in Drosophila virilis (Fruit fly).